The following is a 119-amino-acid chain: Large ribosomal subunit protein bL20 (119 aa).

This sequence belongs to the bacterial ribosomal protein bL20 family.

Its function is as follows. Binds directly to 23S ribosomal RNA and is necessary for the in vitro assembly process of the 50S ribosomal subunit. It is not involved in the protein synthesizing functions of that subunit. This Albidiferax ferrireducens (strain ATCC BAA-621 / DSM 15236 / T118) (Rhodoferax ferrireducens) protein is Large ribosomal subunit protein bL20.